The following is a 59-amino-acid chain: U-myrmeciitoxin(01)-Mg5b (59 aa).

An N-terminal signal peptide occupies residues 1–21 (MRLSYLSLALAIIFVLTIMHA). Positions 22–38 (SNVEAKASADPEPDAVG) are excised as a propeptide.

In terms of tissue distribution, expressed by the venom gland.

It localises to the secreted. May have antimicrobial properties, like most ant linear peptides. This is U-myrmeciitoxin(01)-Mg5b from Myrmecia gulosa (Red bulldog ant).